A 412-amino-acid chain; its full sequence is Serine hydroxymethyltransferase (412 aa).

(6S)-5,6,7,8-tetrahydrofolate is bound by residues leucine 117 and 121–123; that span reads GHL. Lysine 226 bears the N6-(pyridoxal phosphate)lysine mark.

Belongs to the SHMT family. Homodimer. The cofactor is pyridoxal 5'-phosphate.

The protein resides in the cytoplasm. The catalysed reaction is (6R)-5,10-methylene-5,6,7,8-tetrahydrofolate + glycine + H2O = (6S)-5,6,7,8-tetrahydrofolate + L-serine. It participates in one-carbon metabolism; tetrahydrofolate interconversion. The protein operates within amino-acid biosynthesis; glycine biosynthesis; glycine from L-serine: step 1/1. Functionally, catalyzes the reversible interconversion of serine and glycine with tetrahydrofolate (THF) serving as the one-carbon carrier. This reaction serves as the major source of one-carbon groups required for the biosynthesis of purines, thymidylate, methionine, and other important biomolecules. Also exhibits THF-independent aldolase activity toward beta-hydroxyamino acids, producing glycine and aldehydes, via a retro-aldol mechanism. The chain is Serine hydroxymethyltransferase from Staphylococcus aureus (strain USA300).